The chain runs to 311 residues: Formimidoylglutamase (311 aa).

His-130, Asp-155, His-157, Asp-159, Cys-242, and Asp-244 together coordinate Mn(2+).

The protein belongs to the arginase family. Mn(2+) is required as a cofactor.

It catalyses the reaction N-formimidoyl-L-glutamate + H2O = formamide + L-glutamate. The protein operates within amino-acid degradation; L-histidine degradation into L-glutamate; L-glutamate from N-formimidoyl-L-glutamate (hydrolase route): step 1/1. Functionally, catalyzes the conversion of N-formimidoyl-L-glutamate to L-glutamate and formamide. This is Formimidoylglutamase from Staphylococcus aureus (strain bovine RF122 / ET3-1).